The following is a 369-amino-acid chain: 3-dehydroquinate synthase (369 aa).

Residues 110–114 (GVIGD), 134–135 (TT), Lys147, Lys156, and 174–177 (TLKT) contribute to the NAD(+) site. Zn(2+)-binding residues include Glu189, His254, and His271.

Belongs to the sugar phosphate cyclases superfamily. Dehydroquinate synthase family. It depends on Co(2+) as a cofactor. The cofactor is Zn(2+). Requires NAD(+) as cofactor.

It localises to the cytoplasm. The catalysed reaction is 7-phospho-2-dehydro-3-deoxy-D-arabino-heptonate = 3-dehydroquinate + phosphate. It participates in metabolic intermediate biosynthesis; chorismate biosynthesis; chorismate from D-erythrose 4-phosphate and phosphoenolpyruvate: step 2/7. Functionally, catalyzes the conversion of 3-deoxy-D-arabino-heptulosonate 7-phosphate (DAHP) to dehydroquinate (DHQ). The sequence is that of 3-dehydroquinate synthase from Cyanothece sp. (strain PCC 7425 / ATCC 29141).